Consider the following 156-residue polypeptide: SCP2 sterol-binding domain-containing protein 1 (156 aa).

The region spanning 44 to 156 is the SCP2 domain; that stretch reads TVPVFEDISQ…ERVFKDWAKW (113 aa).

The protein is SCP2 sterol-binding domain-containing protein 1 (SCP2D1) of Bos taurus (Bovine).